The chain runs to 472 residues: Chitobiosyldiphosphodolichol beta-mannosyltransferase (472 aa).

Over 1 to 20 (MEEFQFIKYKGFDHVFKYSG) the chain is Lumenal. The chain crosses the membrane as a helical span at residues 21 to 41 (PWLWWLVGFYLCLPILAYTLL). Residues 42–118 (PYLTMNGTIS…PITVTKNTSN (77 aa)) lie on the Cytoplasmic side of the membrane. Residues 119–139 (LPFILFAAKKMVVQFFQLLKL) constitute an intramembrane region (helical). At 140 to 472 (LSDFRGTDYV…MGKRFEYSTD (333 aa)) the chain is on the cytoplasmic side.

It belongs to the glycosyltransferase group 1 family.

It localises to the endoplasmic reticulum membrane. It carries out the reaction an N,N'-diacetylchitobiosyl-diphospho-di-trans,poly-cis-dolichol + GDP-alpha-D-mannose = a beta-D-Man-(1-&gt;4)-beta-D-GlcNAc-(1-&gt;4)-alpha-D-GlcNAc-diphospho-di-trans,poly-cis-dolichol + GDP + H(+). Its pathway is protein modification; protein glycosylation. Functionally, participates in the formation of the lipid-linked precursor oligosaccharide for N-glycosylation. Involved in assembling the dolichol-pyrophosphate-GlcNAc(2)-Man(5) intermediate on the cytoplasmic surface of the ER. This is Chitobiosyldiphosphodolichol beta-mannosyltransferase (ALG1) from Debaryomyces hansenii (strain ATCC 36239 / CBS 767 / BCRC 21394 / JCM 1990 / NBRC 0083 / IGC 2968) (Yeast).